The following is a 501-amino-acid chain: Glycerol kinase (501 aa).

An ADP-binding site is contributed by Thr-17. Residues Thr-17, Thr-18, and Ser-19 each coordinate ATP. Thr-17 is a binding site for sn-glycerol 3-phosphate. Residue Arg-21 participates in ADP binding. The sn-glycerol 3-phosphate site is built by Arg-87, Glu-88, Tyr-139, and Asp-243. Arg-87, Glu-88, Tyr-139, Asp-243, and Gln-244 together coordinate glycerol. Thr-265 and Gly-308 together coordinate ADP. Positions 265, 308, 312, and 409 each coordinate ATP. The ADP site is built by Gly-409 and Asn-413.

Belongs to the FGGY kinase family.

The enzyme catalyses glycerol + ATP = sn-glycerol 3-phosphate + ADP + H(+). Its pathway is polyol metabolism; glycerol degradation via glycerol kinase pathway; sn-glycerol 3-phosphate from glycerol: step 1/1. Inhibited by fructose 1,6-bisphosphate (FBP). Key enzyme in the regulation of glycerol uptake and metabolism. Catalyzes the phosphorylation of glycerol to yield sn-glycerol 3-phosphate. This Pseudomonas syringae pv. tomato (strain ATCC BAA-871 / DC3000) protein is Glycerol kinase.